The primary structure comprises 366 residues: MFKNNNIINDRITNLVSQINKLKRRLDYDIKKNRLLEINMELKLPETWKHPSLIKKINKEKNQLISVVTQITKIDNDVQELIDILNLENSNNINSILDNVLYEFKNIEKSIHELEKCSMFLGKYDYLSCYVDIQSGSGGVEAQDWASMLLRMYVRWAESKKFKIDIIEQTYGEVVGIKSATIEVLGKYAFGWFRTETGIHRLVRKSPFNAHHRRHTSFSSVYVYPILDDAINVDINTRDLKIDVYRASGAGGQHVNKTESAVRIRHLPTGIVVQCQNDRSQHKNKDQAMKQLKAKLYEQLINEKKCQQKILENNKLNIGWGHQIRSYTLDNSRIKDLRTGVESKNIQSVLDGGLDLFVECSLRNGL.

Q253 bears the N5-methylglutamine mark.

Belongs to the prokaryotic/mitochondrial release factor family. Post-translationally, methylated by PrmC. Methylation increases the termination efficiency of RF2.

It localises to the cytoplasm. Peptide chain release factor 2 directs the termination of translation in response to the peptide chain termination codons UGA and UAA. This chain is Peptide chain release factor 2 (prfB), found in Buchnera aphidicola subsp. Baizongia pistaciae (strain Bp).